We begin with the raw amino-acid sequence, 222 residues long: Small ribosomal subunit protein eS1 (222 aa).

This sequence belongs to the eukaryotic ribosomal protein eS1 family.

The polypeptide is Small ribosomal subunit protein eS1 (Pyrobaculum calidifontis (strain DSM 21063 / JCM 11548 / VA1)).